The following is a 207-amino-acid chain: 2,3-bisphosphoglycerate-dependent phosphoglycerate mutase (207 aa).

Substrate contacts are provided by residues 10-17 (RHGQSEWN), 23-24 (TG), arginine 62, 89-92 (ERDY), lysine 100, 116-117 (RR), and 160-161 (GN). Catalysis depends on histidine 11, which acts as the Tele-phosphohistidine intermediate. Glutamate 89 acts as the Proton donor/acceptor in catalysis.

The protein belongs to the phosphoglycerate mutase family. BPG-dependent PGAM subfamily. Homodimer.

It catalyses the reaction (2R)-2-phosphoglycerate = (2R)-3-phosphoglycerate. It functions in the pathway carbohydrate degradation; glycolysis; pyruvate from D-glyceraldehyde 3-phosphate: step 3/5. Its function is as follows. Catalyzes the interconversion of 2-phosphoglycerate and 3-phosphoglycerate. In Bradyrhizobium diazoefficiens (strain JCM 10833 / BCRC 13528 / IAM 13628 / NBRC 14792 / USDA 110), this protein is 2,3-bisphosphoglycerate-dependent phosphoglycerate mutase.